Reading from the N-terminus, the 287-residue chain is Ribonuclease Z (287 aa).

Zn(2+)-binding residues include His-64, His-66, Asp-68, His-69, His-124, Asp-191, and His-250. Asp-68 (proton acceptor) is an active-site residue.

This sequence belongs to the RNase Z family. Homodimer. Zn(2+) is required as a cofactor.

The catalysed reaction is Endonucleolytic cleavage of RNA, removing extra 3' nucleotides from tRNA precursor, generating 3' termini of tRNAs. A 3'-hydroxy group is left at the tRNA terminus and a 5'-phosphoryl group is left at the trailer molecule.. Its function is as follows. Zinc phosphodiesterase, which displays some tRNA 3'-processing endonuclease activity. Probably involved in tRNA maturation, by removing a 3'-trailer from precursor tRNA. This Pyrobaculum islandicum (strain DSM 4184 / JCM 9189 / GEO3) protein is Ribonuclease Z.